Here is a 264-residue protein sequence, read N- to C-terminus: Thiazole synthase (264 aa).

The Schiff-base intermediate with DXP role is filled by K106. Residues G167, 193–194, and 215–216 contribute to the 1-deoxy-D-xylulose 5-phosphate site; these read AG and NT.

It belongs to the ThiG family. Homotetramer. Forms heterodimers with either ThiH or ThiS.

Its subcellular location is the cytoplasm. The catalysed reaction is [ThiS sulfur-carrier protein]-C-terminal-Gly-aminoethanethioate + 2-iminoacetate + 1-deoxy-D-xylulose 5-phosphate = [ThiS sulfur-carrier protein]-C-terminal Gly-Gly + 2-[(2R,5Z)-2-carboxy-4-methylthiazol-5(2H)-ylidene]ethyl phosphate + 2 H2O + H(+). It functions in the pathway cofactor biosynthesis; thiamine diphosphate biosynthesis. Functionally, catalyzes the rearrangement of 1-deoxy-D-xylulose 5-phosphate (DXP) to produce the thiazole phosphate moiety of thiamine. Sulfur is provided by the thiocarboxylate moiety of the carrier protein ThiS. In vitro, sulfur can be provided by H(2)S. This Xanthomonas oryzae pv. oryzae (strain MAFF 311018) protein is Thiazole synthase.